We begin with the raw amino-acid sequence, 120 residues long: Small ribosomal subunit protein uS17 (120 aa).

Over residues 1 to 22 (MMAEAKTGAKATKSAAAGAADG) the composition is skewed to low complexity. A disordered region spans residues 1 to 46 (MMAEAKTGAKATKSAAAGAADGASKEKGPKHTPSPPKPSGRRKTRI).

The protein belongs to the universal ribosomal protein uS17 family. Part of the 30S ribosomal subunit.

One of the primary rRNA binding proteins, it binds specifically to the 5'-end of 16S ribosomal RNA. The chain is Small ribosomal subunit protein uS17 from Mycobacterium ulcerans (strain Agy99).